The chain runs to 495 residues: Maternal protein exuperantia-1 (495 aa).

Disordered regions lie at residues 197 to 217 and 377 to 495; these read DESANKENEPENVNRNGSSND and TIKP…AATN. 2 stretches are compositionally biased toward polar residues: residues 207–216 and 398–414; these read ENVNRNGSSN and AASSKNGAMSSRSTSTE.

In terms of biological role, ensures the proper localization of the mRNA of the bicoid gene to the anterior regions of the oocyte thus playing a fundamental role in the establishment of the polarity of the oocyte. May bind the bcd mRNA. The polypeptide is Maternal protein exuperantia-1 (exu1) (Drosophila pseudoobscura pseudoobscura (Fruit fly)).